The following is a 318-amino-acid chain: Ornithine carbamoyltransferase (318 aa).

Residues 63 to 66, glutamine 90, arginine 114, and 141 to 144 contribute to the carbamoyl phosphate site; these read STRT and HPCQ. Residues asparagine 172, aspartate 235, and 239–240 contribute to the L-ornithine site; that span reads SM. Carbamoyl phosphate contacts are provided by residues 275-276 and arginine 303; that span reads CL.

The protein belongs to the aspartate/ornithine carbamoyltransferase superfamily. OTCase family.

The protein resides in the cytoplasm. It carries out the reaction carbamoyl phosphate + L-ornithine = L-citrulline + phosphate + H(+). The protein operates within amino-acid biosynthesis; L-arginine biosynthesis; L-arginine from L-ornithine and carbamoyl phosphate: step 1/3. Functionally, reversibly catalyzes the transfer of the carbamoyl group from carbamoyl phosphate (CP) to the N(epsilon) atom of ornithine (ORN) to produce L-citrulline. This Prochlorococcus marinus (strain MIT 9313) protein is Ornithine carbamoyltransferase.